Consider the following 329-residue polypeptide: MQKDHVGAVYELLNEAAIMIKNELQISYIEALAEAGEMYFLEKTDQLKLPADQKTKQLQALLEKAEFGTYEHEWVRKAFQLAVLKGMKDISHPNRQMTPDTIGLFISYLVNKFMADKKELTILDPALGTGNLLFTVLNQLSEKTANSFGIEIDDVLLKIAYAQANLLKKELELFHQDSLEPLFIDPVDTVICDLPVGYYPNDEGAEAFELKADEGHSFAHHLFIEQSVKHTKPGGYLFFMIPNHLFESSQSGKLKQFFKDKVHINALLQLPKSIFKDEAHAKSILVLQKQGENTKAPGQILLANLPSFSNQKAMLDMMAQFDEWFKKEK.

It to type I restriction system adenine methylases.

This is an uncharacterized protein from Bacillus subtilis (strain 168).